A 92-amino-acid chain; its full sequence is Small ribosomal subunit protein uS19 (92 aa).

The protein belongs to the universal ribosomal protein uS19 family.

In terms of biological role, protein S19 forms a complex with S13 that binds strongly to the 16S ribosomal RNA. The chain is Small ribosomal subunit protein uS19 from Rippkaea orientalis (strain PCC 8801 / RF-1) (Cyanothece sp. (strain PCC 8801)).